A 358-amino-acid polypeptide reads, in one-letter code: Protein Wnt-8 (358 aa).

Positions 1 to 22 (MQNTTLFILATLLIFCPFFTAS) are cleaved as a signal peptide. Cys55 and Cys66 are joined by a disulfide. A glycan (N-linked (GlcNAc...) asparagine) is linked at Asn104. 10 cysteine pairs are disulfide-bonded: Cys105-Cys113, Cys115-Cys133, Cys181-Cys195, Cys183-Cys190, Cys260-Cys298, Cys276-Cys291, Cys295-Cys337, Cys313-Cys328, Cys315-Cys325, and Cys320-Cys321. A lipid anchor (O-palmitoleoyl serine) is attached at Ser187. 2 N-linked (GlcNAc...) asparagine glycosylation sites follow: Asn263 and Asn282.

It belongs to the Wnt family. As to quaternary structure, homooligomer; disulfide-linked, leading to inactivation. Interacts with the long chain of cer1. In terms of processing, palmitoleoylation is required for efficient binding to frizzled receptors. Depalmitoleoylation leads to Wnt signaling pathway inhibition. Proteolytic processing by tiki1 and tiki2 promotes oxidation and formation of large disulfide-bond oligomers, leading to inactivation of wnt8.

The protein resides in the secreted. Its subcellular location is the extracellular space. The protein localises to the extracellular matrix. Ligand for members of the frizzled family of seven transmembrane receptors. Plays a role in ventral mesodermal patterning during embryogenesis. Mimics Nieuwkoop center activity. Causes dorsal mesodermal differentiation of animal cap ectoderm when coexpressed with noggin and nuclear, sequence-specific DNA-binding protein xBra. None of these molecules causes dorsal mesoderm formation when expressed alone. In Xenopus laevis (African clawed frog), this protein is Protein Wnt-8 (wnt8).